A 551-amino-acid chain; its full sequence is Palatinase (551 aa).

Asp201 (nucleophile) is an active-site residue. Catalysis depends on Glu243, which acts as the Proton donor.

The protein belongs to the glycosyl hydrolase 13 family.

It catalyses the reaction 6-O-alpha-D-glucopyranosyl-D-fructose + H2O = alpha-D-glucose + D-fructose. Its pathway is glycan degradation; palatinose degradation. Functionally, catalyzes the hydrolysis of palatinose. Shows a strict specificity toward palatinose, and cannot release glucose from the disaccharides sucrose, maltose, trehalose and melibiose. Involved in the degradation of palatinose, a sucrose isomer that is formed as a reserve material under conditions of excess carbon availability, sequestered in a form unavailable to competitors such as fungi or the host plant, and whose consumption appears to be postponed until the preferentially metabolized carbon source (e.g. sucrose) is depleted. The chain is Palatinase from Erwinia rhapontici (Pectobacterium rhapontici).